The primary structure comprises 363 residues: UDP-N-acetylglucosamine--N-acetylmuramyl-(pentapeptide) pyrophosphoryl-undecaprenol N-acetylglucosamine transferase (363 aa).

UDP-N-acetyl-alpha-D-glucosamine contacts are provided by residues 10–12 (TGG), Asn-124, Ser-195, Ile-249, and Gln-294.

This sequence belongs to the glycosyltransferase 28 family. MurG subfamily.

It is found in the cell membrane. It carries out the reaction Mur2Ac(oyl-L-Ala-gamma-D-Glu-L-Lys-D-Ala-D-Ala)-di-trans,octa-cis-undecaprenyl diphosphate + UDP-N-acetyl-alpha-D-glucosamine = beta-D-GlcNAc-(1-&gt;4)-Mur2Ac(oyl-L-Ala-gamma-D-Glu-L-Lys-D-Ala-D-Ala)-di-trans,octa-cis-undecaprenyl diphosphate + UDP + H(+). It participates in cell wall biogenesis; peptidoglycan biosynthesis. Its function is as follows. Cell wall formation. Catalyzes the transfer of a GlcNAc subunit on undecaprenyl-pyrophosphoryl-MurNAc-pentapeptide (lipid intermediate I) to form undecaprenyl-pyrophosphoryl-MurNAc-(pentapeptide)GlcNAc (lipid intermediate II). In Leuconostoc mesenteroides subsp. mesenteroides (strain ATCC 8293 / DSM 20343 / BCRC 11652 / CCM 1803 / JCM 6124 / NCDO 523 / NBRC 100496 / NCIMB 8023 / NCTC 12954 / NRRL B-1118 / 37Y), this protein is UDP-N-acetylglucosamine--N-acetylmuramyl-(pentapeptide) pyrophosphoryl-undecaprenol N-acetylglucosamine transferase.